The primary structure comprises 337 residues: 1-aminocyclopropane-1-carboxylate deaminase (337 aa).

N6-(pyridoxal phosphate)lysine is present on K50. The active-site Nucleophile is the S77.

The protein belongs to the ACC deaminase/D-cysteine desulfhydrase family. In terms of assembly, homotrimer. Requires pyridoxal 5'-phosphate as cofactor.

The enzyme catalyses 1-aminocyclopropane-1-carboxylate + H2O = 2-oxobutanoate + NH4(+). Catalyzes a cyclopropane ring-opening reaction, the irreversible conversion of 1-aminocyclopropane-1-carboxylate (ACC) to ammonia and alpha-ketobutyrate. Allows growth on ACC as a nitrogen source. This is 1-aminocyclopropane-1-carboxylate deaminase from Rhizobium radiobacter (Agrobacterium tumefaciens).